A 466-amino-acid chain; its full sequence is Soluble pyridine nucleotide transhydrogenase (466 aa).

Residue 36–45 coordinates FAD; it reads ERYQNVGGGC.

Belongs to the class-I pyridine nucleotide-disulfide oxidoreductase family. It depends on FAD as a cofactor.

It is found in the cytoplasm. The catalysed reaction is NAD(+) + NADPH = NADH + NADP(+). Conversion of NADPH, generated by peripheral catabolic pathways, to NADH, which can enter the respiratory chain for energy generation. This chain is Soluble pyridine nucleotide transhydrogenase, found in Escherichia coli O9:H4 (strain HS).